The chain runs to 419 residues: UDP-N-acetylglucosamine 1-carboxyvinyltransferase (419 aa).

Phosphoenolpyruvate is bound at residue 22–23; it reads KN. R92 lines the UDP-N-acetyl-alpha-D-glucosamine pocket. The Proton donor role is filled by C116. A 2-(S-cysteinyl)pyruvic acid O-phosphothioketal modification is found at C116. D306 and I328 together coordinate UDP-N-acetyl-alpha-D-glucosamine.

The protein belongs to the EPSP synthase family. MurA subfamily.

It localises to the cytoplasm. It catalyses the reaction phosphoenolpyruvate + UDP-N-acetyl-alpha-D-glucosamine = UDP-N-acetyl-3-O-(1-carboxyvinyl)-alpha-D-glucosamine + phosphate. It functions in the pathway cell wall biogenesis; peptidoglycan biosynthesis. Cell wall formation. Adds enolpyruvyl to UDP-N-acetylglucosamine. The protein is UDP-N-acetylglucosamine 1-carboxyvinyltransferase of Psychromonas ingrahamii (strain DSM 17664 / CCUG 51855 / 37).